Reading from the N-terminus, the 243-residue chain is Vesicle-associated membrane protein-associated protein B (243 aa).

Alanine 2 is modified (N-acetylalanine). At 2 to 218 the chain is on the cytoplasmic side; the sequence is AKVEQVLSLE…AALAASGKEE (217 aa). An MSP domain is found at 7–124; that stretch reads VLSLEPQHEL…MDSKLRCVFE (118 aa). Serine 146 carries the post-translational modification Phosphoserine. Lysine 147 participates in a covalent cross-link: Glycyl lysine isopeptide (Lys-Gly) (interchain with G-Cter in SUMO1). A Phosphoserine modification is found at serine 159. A coiled-coil region spans residues 161-196; that stretch reads LDDAEVKKVMEECRRLQGEVQRLREESRQLKEEDGL. A Phosphoserine modification is found at serine 206. Residues 219–239 form a helical; Anchor for type IV membrane protein membrane-spanning segment; sequence GLSARLLALVVLFFIVGVIIG.

It belongs to the VAMP-associated protein (VAP) (TC 9.B.17) family. As to quaternary structure, homodimer, and heterodimer with VAPA. Interacts with VAMP1 and VAMP2. Interacts (via MSP domain) with ZFYVE27. Interacts with RMDN3. Interacts with KIF5A in a ZFYVE27-dependent manner. Interacts (via MSP domain) with STARD3 (via phospho-FFAT motif). Interacts with STARD3NL (via FFAT motif). Interacts with CERT1. Interacts with PLEKHA3 and SACM1L to form a ternary complex. Interacts with VPS13A (via FFAT motif). Interacts with RB1CC1 (via phosphorylated FFAT motif), MIGA2 (via phosphorylated FFAT motif), RMDN3 (via phosphorylated FFAT motif), OSBPL1A (via FFAT motif), KCNB1 (via phosphorylated FFAT motif) and KCNB2 (via phosphorylated FFAT motif). Interacts (via MSP domain) with WDR44; the interactions connect the endoplasmic reticulum (ER) with the endosomal tubule. Ubiquitous.

It is found in the endoplasmic reticulum membrane. Its function is as follows. Endoplasmic reticulum (ER)-anchored protein that mediates the formation of contact sites between the ER and endosomes via interaction with FFAT motif-containing proteins such as STARD3 or WDR44. Interacts with STARD3 in a FFAT motif phosphorylation dependent manner. Via interaction with WDR44 participates in neosynthesized protein export. Participates in the endoplasmic reticulum unfolded protein response (UPR) by inducing ERN1/IRE1 activity. Involved in cellular calcium homeostasis regulation. The chain is Vesicle-associated membrane protein-associated protein B from Rattus norvegicus (Rat).